A 445-amino-acid chain; its full sequence is Cholesterol side-chain cleavage enzyme, mitochondrial (445 aa).

A mitochondrion-targeting transit peptide spans 1–36; the sequence is RGLPSRSVFLRGCQASLSTAQERLGHPGVPTREGVR.

Belongs to the cytochrome P450 family. Interacts with FDX1/adrenodoxin. The cofactor is heme.

Its subcellular location is the mitochondrion inner membrane. It carries out the reaction 6 reduced [adrenodoxin] + cholesterol + 3 O2 + 6 H(+) = 4-methylpentanal + pregnenolone + 6 oxidized [adrenodoxin] + 4 H2O. It catalyses the reaction 2 reduced [adrenodoxin] + cholesterol + O2 + 2 H(+) = (22R)-hydroxycholesterol + 2 oxidized [adrenodoxin] + H2O. The catalysed reaction is (22R)-hydroxycholesterol + 2 reduced [adrenodoxin] + O2 + 2 H(+) = (20R,22R)-20,22-dihydroxycholesterol + 2 oxidized [adrenodoxin] + H2O. The enzyme catalyses (20R,22R)-20,22-dihydroxycholesterol + 2 reduced [adrenodoxin] + O2 + 2 H(+) = 4-methylpentanal + pregnenolone + 2 oxidized [adrenodoxin] + 2 H2O. Its pathway is lipid metabolism; C21-steroid hormone metabolism. It functions in the pathway steroid metabolism; cholesterol metabolism. Functionally, a cytochrome P450 monooxygenase that catalyzes the side-chain hydroxylation and cleavage of cholesterol to pregnenolone, the precursor of most steroid hormones. Catalyzes three sequential oxidation reactions of cholesterol, namely the hydroxylation at C22 followed with the hydroxylation at C20 to yield 20R,22R-hydroxycholesterol that is further cleaved between C20 and C22 to yield the C21-steroid pregnenolone and 4-methylpentanal. Mechanistically, uses molecular oxygen inserting one oxygen atom into a substrate and reducing the second into a water molecule. Two electrons are provided by NADPH via a two-protein mitochondrial transfer system comprising flavoprotein FDXR (adrenodoxin/ferredoxin reductase) and nonheme iron-sulfur protein FDX1 or FDX2 (adrenodoxin/ferredoxin). The chain is Cholesterol side-chain cleavage enzyme, mitochondrial (CYP11A1) from Oryctolagus cuniculus (Rabbit).